We begin with the raw amino-acid sequence, 215 residues long: Myelin protein zero-like protein 2 (215 aa).

Positions 1-26 (MYGKSSTRAVLLLLGIQLTALWPIAA) are cleaved as a signal peptide. Positions 27-141 (VEIYTSRVLE…DGVIGEIRLS (115 aa)) constitute an Ig-like V-type domain. Residues 27-154 (VEIYTSRVLE…TVRFSEIHFL (128 aa)) lie on the Extracellular side of the membrane. N-linked (GlcNAc...) asparagine glycans are attached at residues Asn-39 and Asn-118. The cysteines at positions 47 and 123 are disulfide-linked. Residues 155–175 (ALAIGSACALMIIIVIVVVLF) form a helical membrane-spanning segment. Residues 176-215 (QHYRKKRWAERAHKVVEIKSKEEERLNQEKKVSVYLEDTD) lie on the Cytoplasmic side of the membrane.

Belongs to the myelin P0 protein family. In terms of tissue distribution, widely expressed. In fetal tissues, highest expression in the inner ear. In adult tissues, highest levels in thymus and lung.

The protein resides in the membrane. Its function is as follows. Mediates homophilic cell-cell adhesion. This Homo sapiens (Human) protein is Myelin protein zero-like protein 2 (MPZL2).